The primary structure comprises 192 residues: Imidazoleglycerol-phosphate dehydratase (192 aa).

It belongs to the imidazoleglycerol-phosphate dehydratase family.

Its subcellular location is the cytoplasm. The enzyme catalyses D-erythro-1-(imidazol-4-yl)glycerol 3-phosphate = 3-(imidazol-4-yl)-2-oxopropyl phosphate + H2O. It functions in the pathway amino-acid biosynthesis; L-histidine biosynthesis; L-histidine from 5-phospho-alpha-D-ribose 1-diphosphate: step 6/9. The sequence is that of Imidazoleglycerol-phosphate dehydratase from Carboxydothermus hydrogenoformans (strain ATCC BAA-161 / DSM 6008 / Z-2901).